The primary structure comprises 144 residues: MLRESAVVISYENGIAKVKCQSQSACGQCAAKNSCGTSSLSELNGKRGEHIFNVETLMPLREGQIVEIGLEEKSMLLSALLMYVVPLLTLLIVTMLSDYISDNEILRAILIFGLTALSFILVKSYSRKLGQQTEFQPVLLRVLS.

2 helical membrane-spanning segments follow: residues 76–96 (LLSA…VTML) and 105–125 (ILRA…VKSY).

The protein belongs to the RseC family.

The protein resides in the cell inner membrane. This is an uncharacterized protein from Haemophilus influenzae (strain ATCC 51907 / DSM 11121 / KW20 / Rd).